We begin with the raw amino-acid sequence, 104 residues long: Phosphate metabolism protein 6 (104 aa).

The helical transmembrane segment at 76–96 threads the bilayer; the sequence is IIVIIIVLLLYSLTMVGLFYV.

The protein localises to the vacuole membrane. The sequence is that of Phosphate metabolism protein 6 (PHM6) from Saccharomyces cerevisiae (strain ATCC 204508 / S288c) (Baker's yeast).